Consider the following 289-residue polypeptide: HTH-type transcriptional activator AmpR (289 aa).

In terms of domain architecture, HTH lysR-type spans 6-63 (LPLNALRVFEVAMRQGSFTKAAIELRVTQAAVSHQVARLEDLLGTALFLRTSQGLIPT). The segment at residues 23 to 42 (FTKAAIELRVTQAAVSHQVA) is a DNA-binding region (H-T-H motif).

The protein belongs to the LysR transcriptional regulatory family.

The protein localises to the cytoplasm. Its function is as follows. This protein is a positive regulator of gene expression of cephalosporinase (AmpC). This is HTH-type transcriptional activator AmpR (ampR) from Rhodobacter capsulatus (Rhodopseudomonas capsulata).